The primary structure comprises 548 residues: Eukaryotic translation initiation factor 3 subunit D (548 aa).

Lysine 53 carries the post-translational modification N6-acetyllysine. Serine 161 is subject to Phosphoserine. The tract at residues 285-299 (DFDLPTVSETANEPP) is RNA gate. Disordered stretches follow at residues 288-309 (LPTV…FNSP) and 523-548 (PDGT…EEET). Over residues 291–309 (VSETANEPPQDEGNSFNSP) the composition is skewed to polar residues. 2 positions are modified to phosphoserine: serine 528 and serine 529. Over residues 529–548 (SDEDEEEEEEEEEEEEEEET) the composition is skewed to acidic residues.

The protein belongs to the eIF-3 subunit D family. In terms of assembly, component of the eukaryotic translation initiation factor 3 (eIF-3) complex, which is composed of 13 subunits: EIF3A, EIF3B, EIF3C, EIF3D, EIF3E, EIF3F, EIF3G, EIF3H, EIF3I, EIF3J, EIF3K, EIF3L and EIF3M. The eIF-3 complex appears to include 3 stable modules: module A is composed of EIF3A, EIF3B, EIF3G and EIF3I; module B is composed of EIF3F, EIF3H, and EIF3M; and module C is composed of EIF3C, EIF3D, EIF3E, EIF3K and EIF3L. EIF3C of module C binds EIF3B of module A and EIF3H of module B, thereby linking the three modules. EIF3J is a labile subunit that binds to the eIF-3 complex via EIF3B. The eIF-3 complex interacts with RPS6KB1 under conditions of nutrient depletion. Mitogenic stimulation leads to binding and activation of a complex composed of MTOR and RPTOR, leading to phosphorylation and release of RPS6KB1 and binding of EIF4B to eIF-3.

The protein resides in the cytoplasm. Its function is as follows. mRNA cap-binding component of the eukaryotic translation initiation factor 3 (eIF-3) complex, a complex required for several steps in the initiation of protein synthesis of a specialized repertoire of mRNAs. The eIF-3 complex associates with the 40S ribosome and facilitates the recruitment of eIF-1, eIF-1A, eIF-2:GTP:methionyl-tRNAi and eIF-5 to form the 43S pre-initiation complex (43S PIC). The eIF-3 complex stimulates mRNA recruitment to the 43S PIC and scanning of the mRNA for AUG recognition. The eIF-3 complex is also required for disassembly and recycling of post-termination ribosomal complexes and subsequently prevents premature joining of the 40S and 60S ribosomal subunits prior to initiation. The eIF-3 complex specifically targets and initiates translation of a subset of mRNAs involved in cell proliferation, including cell cycling, differentiation and apoptosis, and uses different modes of RNA stem-loop binding to exert either translational activation or repression. In the eIF-3 complex, EIF3D specifically recognizes and binds the 7-methylguanosine cap of a subset of mRNAs. This chain is Eukaryotic translation initiation factor 3 subunit D, found in Pongo abelii (Sumatran orangutan).